We begin with the raw amino-acid sequence, 481 residues long: Aspartyl/glutamyl-tRNA(Asn/Gln) amidotransferase subunit B (481 aa).

This sequence belongs to the GatB/GatE family. GatB subfamily. As to quaternary structure, heterotrimer of A, B and C subunits.

The enzyme catalyses L-glutamyl-tRNA(Gln) + L-glutamine + ATP + H2O = L-glutaminyl-tRNA(Gln) + L-glutamate + ADP + phosphate + H(+). It catalyses the reaction L-aspartyl-tRNA(Asn) + L-glutamine + ATP + H2O = L-asparaginyl-tRNA(Asn) + L-glutamate + ADP + phosphate + 2 H(+). Functionally, allows the formation of correctly charged Asn-tRNA(Asn) or Gln-tRNA(Gln) through the transamidation of misacylated Asp-tRNA(Asn) or Glu-tRNA(Gln) in organisms which lack either or both of asparaginyl-tRNA or glutaminyl-tRNA synthetases. The reaction takes place in the presence of glutamine and ATP through an activated phospho-Asp-tRNA(Asn) or phospho-Glu-tRNA(Gln). The chain is Aspartyl/glutamyl-tRNA(Asn/Gln) amidotransferase subunit B from Pseudomonas savastanoi pv. phaseolicola (strain 1448A / Race 6) (Pseudomonas syringae pv. phaseolicola (strain 1448A / Race 6)).